The following is a 613-amino-acid chain: Portal protein (613 aa).

The interval 577 to 613 (ATGGDHGIRQAPSARGDAEPDHAKSKPARDPPPGAGS) is disordered. Basic and acidic residues predominate over residues 592–605 (GDAEPDHAKSKPAR).

The protein belongs to the herpesviridae portal protein family. In terms of assembly, homododecamerizes. Interacts with terminase subunits TRM1 and TRM3.

It localises to the virion. The protein localises to the host nucleus. In terms of biological role, forms a portal in the viral capsid through which viral DNA is translocated during DNA packaging. Assembles as a dodecamer at a single fivefold axe of the T=16 icosahedric capsid. Binds to the molecular motor that translocates the viral DNA, termed terminase. The polypeptide is Portal protein (Homo sapiens (Human)).